A 214-amino-acid chain; its full sequence is Charged multivesicular body protein 2b-B (214 aa).

Residues 25–55 (QRAITRDRAALEKQEKQLEMEIKKMAKTGNK) adopt a coiled-coil conformation. The disordered stretch occupies residues 178 to 200 (MAKAPSAAKGLPSTSAAKSKGIS). The MIT-interacting motif motif lies at 202 to 212 (EEIERQLKALG).

Belongs to the SNF7 family. In terms of assembly, probable core component of the endosomal sorting required for transport complex III (ESCRT-III). ESCRT-III components are thought to multimerize to form a flat lattice on the perimeter membrane of the endosome.

The protein resides in the cytoplasm. It localises to the cytosol. The protein localises to the late endosome membrane. Its function is as follows. Probable core component of the endosomal sorting required for transport complex III (ESCRT-III) which is involved in multivesicular bodies (MVBs) formation and sorting of endosomal cargo proteins into MVBs. MVBs contain intraluminal vesicles (ILVs) that are generated by invagination and scission from the limiting membrane of the endosome and mostly are delivered to lysosomes enabling degradation of membrane proteins, such as stimulated growth factor receptors, lysosomal enzymes and lipids. This chain is Charged multivesicular body protein 2b-B (chmp2b-b), found in Xenopus laevis (African clawed frog).